The following is a 257-amino-acid chain: MVLIRVLANLLILQLSYAQKSSELVIGGDECNINEHPFLVLVYYDDYQCGGTLLNEEWVLTAAHCNGKDMEIYLGVHSKKVPNKDVQRRVPKEKFFCDSSKTYTKWNKDIMLIRLDRPVRKSAHIAPLSLPSSPPSVGSVCRIMGWGSITPVEVTFPDVPYCANINLLDDVECKPGYPELLPEYKTLCAGILEGGIDTCGFDSGAPLISNGQFQGIVSWGGDPCAQPREPGVYTNVFDHLDWIKGIIAGNTDVTCPP.

The first 18 residues, 1 to 18 (MVLIRVLANLLILQLSYA), serve as a signal peptide directing secretion. Residues 19–24 (QKSSEL) constitute a propeptide that is removed on maturation. The Peptidase S1 domain maps to 25 to 248 (VIGGDECNIN…HLDWIKGIIA (224 aa)). Cystine bridges form between Cys31/Cys162, Cys49/Cys65, Cys97/Cys255, Cys173/Cys188, and Cys199/Cys224. Residues His64 and Asp109 each act as charge relay system in the active site. Ser203 serves as the catalytic Charge relay system.

This sequence belongs to the peptidase S1 family. Snake venom subfamily. As to quaternary structure, monomer. In terms of tissue distribution, expressed by the venom gland.

The protein localises to the secreted. Functionally, snake venom serine protease that may act in the hemostasis system of the prey. This chain is Snake venom serine protease Dav-KN, found in Deinagkistrodon acutus (Hundred-pace snake).